Here is a 191-residue protein sequence, read N- to C-terminus: MIGSITGNVEEIRDSYIILNVGNIGYIIYVSHKVLQTCKVGDNIKLYIETYVNRDNITQLYGFLNRQEQDYLKMLVTINGINYKTALSILSKLSPEQIFSAVVNNDKIAFKGNGIGEKLAGRIITELQYKINKMPIEETFSIIENDDSLAALISLGYEKLKAFNVIQEIKSKTPDASTQEVIRKALQKLSQ.

The segment at 1–64 (MIGSITGNVE…DNITQLYGFL (64 aa)) is domain I. The interval 65–142 (NRQEQDYLKM…KMPIEETFSI (78 aa)) is domain II. Residues 143–146 (IEND) form a flexible linker region. The domain III stretch occupies residues 146–191 (DDSLAALISLGYEKLKAFNVIQEIKSKTPDASTQEVIRKALQKLSQ).

It belongs to the RuvA family. Homotetramer. Forms an RuvA(8)-RuvB(12)-Holliday junction (HJ) complex. HJ DNA is sandwiched between 2 RuvA tetramers; dsDNA enters through RuvA and exits via RuvB. An RuvB hexamer assembles on each DNA strand where it exits the tetramer. Each RuvB hexamer is contacted by two RuvA subunits (via domain III) on 2 adjacent RuvB subunits; this complex drives branch migration. In the full resolvosome a probable DNA-RuvA(4)-RuvB(12)-RuvC(2) complex forms which resolves the HJ.

The protein localises to the cytoplasm. The RuvA-RuvB-RuvC complex processes Holliday junction (HJ) DNA during genetic recombination and DNA repair, while the RuvA-RuvB complex plays an important role in the rescue of blocked DNA replication forks via replication fork reversal (RFR). RuvA specifically binds to HJ cruciform DNA, conferring on it an open structure. The RuvB hexamer acts as an ATP-dependent pump, pulling dsDNA into and through the RuvAB complex. HJ branch migration allows RuvC to scan DNA until it finds its consensus sequence, where it cleaves and resolves the cruciform DNA. The protein is Holliday junction branch migration complex subunit RuvA of Ehrlichia ruminantium (strain Welgevonden).